The following is a 296-amino-acid chain: GTP cyclohydrolase FolE2 (296 aa).

It belongs to the GTP cyclohydrolase IV family.

It catalyses the reaction GTP + H2O = 7,8-dihydroneopterin 3'-triphosphate + formate + H(+). Its pathway is cofactor biosynthesis; 7,8-dihydroneopterin triphosphate biosynthesis; 7,8-dihydroneopterin triphosphate from GTP: step 1/1. Functionally, converts GTP to 7,8-dihydroneopterin triphosphate. The sequence is that of GTP cyclohydrolase FolE2 from Ectopseudomonas mendocina (strain ymp) (Pseudomonas mendocina).